A 525-amino-acid polypeptide reads, in one-letter code: GMP synthase [glutamine-hydrolyzing] (525 aa).

The Glutamine amidotransferase type-1 domain occupies 9–207 (RILILDFGSQ…VRDICQCEAL (199 aa)). Cysteine 86 acts as the Nucleophile in catalysis. Active-site residues include histidine 181 and glutamate 183. The 193-residue stretch at 208-400 (WTPAKIIDDA…LGLPYDMLYR (193 aa)) folds into the GMPS ATP-PPase domain. An ATP-binding site is contributed by 235–241 (SGGVDSS).

In terms of assembly, homodimer.

The enzyme catalyses XMP + L-glutamine + ATP + H2O = GMP + L-glutamate + AMP + diphosphate + 2 H(+). Its pathway is purine metabolism; GMP biosynthesis; GMP from XMP (L-Gln route): step 1/1. In terms of biological role, catalyzes the synthesis of GMP from XMP. This is GMP synthase [glutamine-hydrolyzing] from Shigella boydii serotype 4 (strain Sb227).